A 230-amino-acid chain; its full sequence is Interleukin-22 receptor subunit alpha-2 (230 aa).

Positions 1–20 (MMPKHCLLGLLIILLSSATE) are cleaved as a signal peptide. Fibronectin type-III domains lie at 29–128 (TPQK…TKLD) and 129–230 (PPVV…VHIP). Cystine bridges form between cysteine 77–cysteine 85 and cysteine 205–cysteine 226.

It belongs to the type II cytokine receptor family. In terms of tissue distribution, highly expressed in lymph nodes and at lower levels in lung, spleen, and thymus. Not expressed in kidney, liver and heart.

Its subcellular location is the secreted. Its function is as follows. Receptor for IL22. Binds to IL22, prevents interaction with the functional IL-22R complex and blocks the activity of IL22 (in vitro). May play an important role as an IL22 antagonist in the regulation of inflammatory responses. The protein is Interleukin-22 receptor subunit alpha-2 (Il22ra2) of Mus musculus (Mouse).